The primary structure comprises 212 residues: Glycerol-3-phosphate acyltransferase (212 aa).

The next 5 membrane-spanning stretches (helical) occupy residues 9–29, 67–87, 95–115, 128–148, and 168–190; these read AACL…GYLL, GPAL…VLLA, WLQV…VWLG, MFLG…MAVI, and LMVV…LMVL.

It belongs to the PlsY family. Probably interacts with PlsX.

It localises to the cell inner membrane. It carries out the reaction an acyl phosphate + sn-glycerol 3-phosphate = a 1-acyl-sn-glycero-3-phosphate + phosphate. It participates in lipid metabolism; phospholipid metabolism. Catalyzes the transfer of an acyl group from acyl-phosphate (acyl-PO(4)) to glycerol-3-phosphate (G3P) to form lysophosphatidic acid (LPA). This enzyme utilizes acyl-phosphate as fatty acyl donor, but not acyl-CoA or acyl-ACP. The protein is Glycerol-3-phosphate acyltransferase of Parasynechococcus marenigrum (strain WH8102).